A 327-amino-acid polypeptide reads, in one-letter code: Aspartate--ammonia ligase (327 aa).

Belongs to the class-II aminoacyl-tRNA synthetase family. AsnA subfamily.

Its subcellular location is the cytoplasm. It catalyses the reaction L-aspartate + NH4(+) + ATP = L-asparagine + AMP + diphosphate + H(+). It functions in the pathway amino-acid biosynthesis; L-asparagine biosynthesis; L-asparagine from L-aspartate (ammonia route): step 1/1. In Bacillus cereus (strain ATCC 10987 / NRS 248), this protein is Aspartate--ammonia ligase.